We begin with the raw amino-acid sequence, 179 residues long: MAVRKILKIGNPILRQTSEDVSESEIQTKDFKKLIRDMFETMRHADGVGLAAPQIGVLKKLVVVGQEDDNERYPGTPEVPNQIILNPEITPLSPPRDGFWEGCLSVPGMRGYVERPNKIRMKWRDENYVEHDEIIEGYRAIVLQHECDHLFGVLYVDRLKSTKLFGYNEDIDTAGKLLD.

The Fe cation site is built by Cys103 and His145. The active site involves Glu146. His149 contacts Fe cation.

This sequence belongs to the polypeptide deformylase family. It depends on Fe(2+) as a cofactor.

It catalyses the reaction N-terminal N-formyl-L-methionyl-[peptide] + H2O = N-terminal L-methionyl-[peptide] + formate. Its function is as follows. Removes the formyl group from the N-terminal Met of newly synthesized proteins. Requires at least a dipeptide for an efficient rate of reaction. N-terminal L-methionine is a prerequisite for activity but the enzyme has broad specificity at other positions. This chain is Peptide deformylase, found in Leptospira biflexa serovar Patoc (strain Patoc 1 / Ames).